Here is a 2051-residue protein sequence, read N- to C-terminus: Autophagy-related protein 2 (2051 aa).

Residues 31-121 form the Chorein N-terminal domain; it reads QALDLDNLNF…QDEQTAKNKK (91 aa). Basic and acidic residues predominate over residues 108 to 117; it reads SKQEQDEQTA. Disordered stretches follow at residues 108-129, 152-179, 297-331, 363-384, 419-466, and 501-564; these read SKQE…DGDE, RRLE…DDDG, SLVK…DMSI, DTQY…TPRA, RSEP…ADTE, and PGGW…DTST. Polar residues-rich tracts occupy residues 374–383 and 426–435; these read AGSSPLSTPR and PPTSFQPQTM. The segment covering 436-454 has biased composition (low complexity); it reads PSGAVSPAPSEPSSSASSV.

This sequence belongs to the ATG2 family.

Its subcellular location is the preautophagosomal structure membrane. It localises to the endoplasmic reticulum membrane. It carries out the reaction a 1,2-diacyl-sn-glycero-3-phosphocholine(in) = a 1,2-diacyl-sn-glycero-3-phosphocholine(out). The enzyme catalyses a 1,2-diacyl-sn-glycero-3-phospho-L-serine(in) = a 1,2-diacyl-sn-glycero-3-phospho-L-serine(out). The catalysed reaction is a 1,2-diacyl-sn-glycero-3-phosphoethanolamine(in) = a 1,2-diacyl-sn-glycero-3-phosphoethanolamine(out). Functionally, lipid transfer protein required for autophagosome completion and peroxisome degradation. Tethers the edge of the isolation membrane (IM) to the endoplasmic reticulum (ER) and mediates direct lipid transfer from ER to IM for IM expansion. Atg-2 binds to the ER exit site (ERES), which is the membrane source for autophagosome formation, using basic residues in its N-terminal region (NR) and to the expanding edge of the IM through its C-terminal region. The latter binding is assisted by an atg-18-PtdIns3P interaction. Atg-2 then extracts phospholipids from the membrane source using its NR and transfers them to atg-9 to the IM through its predicted beta-sheet-rich structure for membrane expansion. The protein is Autophagy-related protein 2 (apg-2) of Neurospora crassa (strain ATCC 24698 / 74-OR23-1A / CBS 708.71 / DSM 1257 / FGSC 987).